The chain runs to 129 residues: Large ribosomal subunit protein bL20 (129 aa).

The protein belongs to the bacterial ribosomal protein bL20 family.

In terms of biological role, binds directly to 23S ribosomal RNA and is necessary for the in vitro assembly process of the 50S ribosomal subunit. It is not involved in the protein synthesizing functions of that subunit. In Mycobacterium sp. (strain JLS), this protein is Large ribosomal subunit protein bL20.